The chain runs to 350 residues: MFKVLPFTAIVHPNAITAPRLVVKMSAIATKNAVESFVVKPPAHPTYDLKGVIQLALSEDAGDIGDVTCKATIPIDMESEAHFLAKEDGIVAGIALAEMIFAEVDPSLKMEWSINDGDKVHKGLKFGKVQGKAHSIVIAERVVLNFMQRMSGIATLTKAMADAAHPATILETRKTAPGLRLVDKWAVLIGGGKNHRMGLFDMVMIKDNHISAAGGVSKALNSVDQYLEQNKLQMGVEVETRTIAEVHEVLEYASQTKTSLTRIMLDNMVVPLSNGDIEVSMLEEAVDLINGRFETEASGNVTLETVHKIGQTGVTYISSGALTHSVKALDISLKIDTELALEVGRRTKRA.

Residues R141, 172–174 (TRK), R196, K206, E239, D266, 298–300 (SGN), and 319–321 (SGA) each bind substrate.

This sequence belongs to the NadC/ModD family.

It carries out the reaction nicotinate beta-D-ribonucleotide + CO2 + diphosphate = quinolinate + 5-phospho-alpha-D-ribose 1-diphosphate + 2 H(+). It participates in alkaloid biosynthesis; nicotine biosynthesis. The protein operates within cofactor biosynthesis; NAD(+) biosynthesis; nicotinate D-ribonucleotide from quinolinate: step 1/1. Involved in the biosynthesis of pyridine alkaloid natural products, leading mainly to the production of anabasine, anatabine, nicotine and nornicotine, effective deterrents against herbivores with antiparasitic and pesticide properties (neurotoxins); nornicotine serves as the precursor in the synthesis of the carcinogen compound N'-nitrosonornicotine (NNN). Involved in the catabolism of quinolinic acid (QA). This is Quinolinate phosphoribosyltransferase [decarboxylating] 1b from Nicotiana tabacum (Common tobacco).